The primary structure comprises 83 residues: Small ribosomal subunit protein bS18 (83 aa).

Belongs to the bacterial ribosomal protein bS18 family. In terms of assembly, part of the 30S ribosomal subunit. Forms a tight heterodimer with protein bS6.

Binds as a heterodimer with protein bS6 to the central domain of the 16S rRNA, where it helps stabilize the platform of the 30S subunit. This is Small ribosomal subunit protein bS18 from Cytophaga hutchinsonii (strain ATCC 33406 / DSM 1761 / CIP 103989 / NBRC 15051 / NCIMB 9469 / D465).